The primary structure comprises 336 residues: D-alanine--D-alanine ligase (336 aa).

Positions 124-330 (KMWFSALGIP…FTEYLSLVIK (207 aa)) constitute an ATP-grasp domain. An ATP-binding site is contributed by 154–209 (ALENWGSIFVKAASQGSSVGCYKVDDSSKVAGVLKDAFGYAPYVIVEKTIKARELE). Mg(2+) is bound by residues Asp284, Glu297, and Asn299.

This sequence belongs to the D-alanine--D-alanine ligase family. Mg(2+) is required as a cofactor. The cofactor is Mn(2+).

It is found in the cytoplasm. The catalysed reaction is 2 D-alanine + ATP = D-alanyl-D-alanine + ADP + phosphate + H(+). It participates in cell wall biogenesis; peptidoglycan biosynthesis. In terms of biological role, cell wall formation. In Shewanella sp. (strain MR-7), this protein is D-alanine--D-alanine ligase.